Reading from the N-terminus, the 585-residue chain is BURP domain-containing protein 17 (585 aa).

A signal peptide spans 1 to 20 (MDRIFARFFCFLLIAAVSHA). The segment at 63 to 82 (GQRNYKSSVSHVAERSHRVD) is disordered. The 222-residue stretch at 363–584 (FFLEKNLQQG…QPDAVVWTRR (222 aa)) folds into the BURP domain.

Expressed in leaves.

This Oryza sativa subsp. japonica (Rice) protein is BURP domain-containing protein 17 (BURP17).